The chain runs to 223 residues: Ubiquitin carboxyl-terminal hydrolase isozyme L1 (223 aa).

Met-1 is subject to N-acetylmethionine. Positions 2 to 221 (QLKPMEINPE…VRFSAVALCK (220 aa)) constitute a UCH catalytic domain. An interaction with ubiquitin region spans residues 5–10 (PMEINP). Cys-90 serves as the catalytic Nucleophile. The residue at position 125 (Ser-125) is a Phosphoserine. His-161 acts as the Proton donor in catalysis. The segment at 211–216 (EVRFSA) is interaction with ubiquitin. Cys-220 carries S-farnesyl cysteine lipidation. The propeptide at 221-223 (KAA) is removed in mature form.

Belongs to the peptidase C12 family. In terms of assembly, monomer. Homodimer. Interacts with COPS5 and SNCA. O-glycosylated. As to expression, expressed in the placenta at all stages of pregnancy. Expression increases as pregnancy progresses.

Its subcellular location is the cytoplasm. It localises to the endoplasmic reticulum membrane. It is found in the nucleus. It catalyses the reaction Thiol-dependent hydrolysis of ester, thioester, amide, peptide and isopeptide bonds formed by the C-terminal Gly of ubiquitin (a 76-residue protein attached to proteins as an intracellular targeting signal).. Ubiquitin-protein hydrolase involved both in the processing of ubiquitin precursors and of ubiquitinated proteins. This enzyme is a thiol protease that recognizes and hydrolyzes a peptide bond at the C-terminal glycine of ubiquitin. Also binds to free monoubiquitin and may prevent its degradation in lysosomes. The homodimer may have ATP-independent ubiquitin ligase activity. This Macaca fascicularis (Crab-eating macaque) protein is Ubiquitin carboxyl-terminal hydrolase isozyme L1 (UCHL1).